The sequence spans 531 residues: 2-isopropylmalate synthase (531 aa).

One can recognise a Pyruvate carboxyltransferase domain in the interval isoleucine 8–tyrosine 284. The Mn(2+) site is built by aspartate 17, histidine 208, histidine 210, and asparagine 244. The tract at residues arginine 408 to alanine 531 is regulatory domain.

This sequence belongs to the alpha-IPM synthase/homocitrate synthase family. LeuA type 1 subfamily. In terms of assembly, homodimer. It depends on Mn(2+) as a cofactor.

It localises to the cytoplasm. It carries out the reaction 3-methyl-2-oxobutanoate + acetyl-CoA + H2O = (2S)-2-isopropylmalate + CoA + H(+). It functions in the pathway amino-acid biosynthesis; L-leucine biosynthesis; L-leucine from 3-methyl-2-oxobutanoate: step 1/4. Its function is as follows. Catalyzes the condensation of the acetyl group of acetyl-CoA with 3-methyl-2-oxobutanoate (2-ketoisovalerate) to form 3-carboxy-3-hydroxy-4-methylpentanoate (2-isopropylmalate). This Trichormus variabilis (strain ATCC 29413 / PCC 7937) (Anabaena variabilis) protein is 2-isopropylmalate synthase.